Here is a 164-residue protein sequence, read N- to C-terminus: Large ribosomal subunit protein uL15 (164 aa).

A disordered region spans residues 1–52 (MSLSKLKAPKGANRERTRVGRGQGSGLGKTAGRGGKGQKARSGNMHFEGFEG). Positions 21–37 (RGQGSGLGKTAGRGGKG) are enriched in gly residues.

The protein belongs to the universal ribosomal protein uL15 family. In terms of assembly, part of the 50S ribosomal subunit.

Binds to the 23S rRNA. This Anaeromyxobacter sp. (strain Fw109-5) protein is Large ribosomal subunit protein uL15.